The chain runs to 227 residues: Uracil-DNA glycosylase (227 aa).

Catalysis depends on Asp68, which acts as the Proton acceptor.

This sequence belongs to the uracil-DNA glycosylase (UDG) superfamily. UNG family.

It is found in the cytoplasm. It catalyses the reaction Hydrolyzes single-stranded DNA or mismatched double-stranded DNA and polynucleotides, releasing free uracil.. Functionally, excises uracil residues from the DNA which can arise as a result of misincorporation of dUMP residues by DNA polymerase or due to deamination of cytosine. This chain is Uracil-DNA glycosylase, found in Mycobacterium sp. (strain JLS).